A 1018-amino-acid polypeptide reads, in one-letter code: UPF0182 protein Tfu_0541 (1018 aa).

The next 7 helical transmembrane spans lie at 20 to 40 (LAPV…AANF), 64 to 84 (ALLF…SVYF), 115 to 135 (VFFW…ATAE), 171 to 191 (VIIG…VVVH), 212 to 232 (VHLS…YWLE), 254 to 274 (AVLY…VLFF), and 287 to 307 (VSLG…PAIV). 2 disordered regions span residues 497-570 (YPVD…QANN) and 939-965 (GDEA…ASSD). 2 stretches are compositionally biased toward acidic residues: residues 542–560 (QDQE…EEEQ) and 939–959 (GDEA…EEEQ).

It belongs to the UPF0182 family.

It is found in the cell membrane. The chain is UPF0182 protein Tfu_0541 from Thermobifida fusca (strain YX).